Here is a 327-residue protein sequence, read N- to C-terminus: BTB/POZ domain-containing protein KCTD12 (327 aa).

Positions 1-28 (MALADSARGLPNGGGGGGGSGSSSSSAE) are disordered. An N-acetylalanine modification is found at alanine 2. Residues 11–21 (PNGGGGGGGSG) show a composition bias toward gly residues. At tyrosine 119 the chain carries Phosphotyrosine. A disordered region spans residues 129-204 (LGAPQQPGPG…PLLTPSQSLD (76 aa)). Phosphoserine is present on residues serine 153, serine 173, and serine 187. The residue at position 198 (threonine 198) is a Phosphothreonine. Serine 202 is modified (phosphoserine).

Interacts as a tetramer with GABBR1 and GABBR2. Expressed in the brain, mainly in the hippocampus and cerebellum.

It is found in the presynaptic cell membrane. Its subcellular location is the postsynaptic cell membrane. In terms of biological role, auxiliary subunit of GABA-B receptors that determine the pharmacology and kinetics of the receptor response. Increases agonist potency and markedly alter the G-protein signaling of the receptors by accelerating onset and promoting desensitization. The sequence is that of BTB/POZ domain-containing protein KCTD12 (Kctd12) from Mus musculus (Mouse).